We begin with the raw amino-acid sequence, 300 residues long: Ribosomal protein L11 methyltransferase (300 aa).

S-adenosyl-L-methionine contacts are provided by Thr152, Gly173, Asp195, and Asn234.

This sequence belongs to the methyltransferase superfamily. PrmA family.

It is found in the cytoplasm. It carries out the reaction L-lysyl-[protein] + 3 S-adenosyl-L-methionine = N(6),N(6),N(6)-trimethyl-L-lysyl-[protein] + 3 S-adenosyl-L-homocysteine + 3 H(+). Functionally, methylates ribosomal protein L11. The polypeptide is Ribosomal protein L11 methyltransferase (Paraburkholderia phymatum (strain DSM 17167 / CIP 108236 / LMG 21445 / STM815) (Burkholderia phymatum)).